Reading from the N-terminus, the 348-residue chain is Protein RecA (348 aa).

Residue 64-71 (GPESSGKT) participates in ATP binding. Basic and acidic residues predominate over residues 325–335 (YEIDGSSKEPL). Positions 325 to 348 (YEIDGSSKEPLDEKEETLSLLDDE) are disordered.

This sequence belongs to the RecA family.

The protein resides in the cytoplasm. Can catalyze the hydrolysis of ATP in the presence of single-stranded DNA, the ATP-dependent uptake of single-stranded DNA by duplex DNA, and the ATP-dependent hybridization of homologous single-stranded DNAs. It interacts with LexA causing its activation and leading to its autocatalytic cleavage. The chain is Protein RecA from Listeria monocytogenes serotype 1/2a (strain 10403S).